The chain runs to 427 residues: Indole diterpene prenyltransferase penD (427 aa).

Residue Tyr-77–Val-78 participates in L-tryptophan binding. Substrate contacts are provided by Arg-99, Lys-186, Tyr-188, Arg-259, Lys-261, Tyr-263, Tyr-344, Tyr-409, and Tyr-413.

The protein belongs to the tryptophan dimethylallyltransferase family.

It functions in the pathway secondary metabolite biosynthesis. Functionally, indole diterpene prenyltransferase; part of the gene cluster that mediates the biosynthesis of the indole diterpenes penitrems. The geranylgeranyl diphosphate (GGPP) synthase penG catalyzes the first step in penitrem biosynthesis via conversion of farnesyl pyrophosphate and isopentyl pyrophosphate into geranylgeranyl pyrophosphate (GGPP). Condensation of indole-3-glycerol phosphate with GGPP by the prenyl transferase penC then forms 3-geranylgeranylindole (3-GGI). Epoxidation by the FAD-dependent monooxygenase penM leads to a epoxidized-GGI that is substrate of the terpene cyclase penB for cyclization to yield paspaline. Paspaline is subsequently converted to 13-desoxypaxilline by the cytochrome P450 monooxygenase penP, the latter being then converted to paxilline by the cytochrome P450 monooxygenase penQ. Paxilline is converted to beta-paxitriol via C-10 ketoreduction by the short-chain dehydrogenase PC-15 which can be monoprenylated at the C-20 by the indole diterpene prenyltransferase penD. A two-step elimination (acetylation and elimination) process performed by the O-acetyltransferase PC-16 and the P.simplicissimum ptmI-ortholog not yet identified in P.crustosum, leads to the production of the prenylated form of penijanthine. The FAD-linked oxidoreductase ptmO then converts the prenylated form of penijanthine into PC-M5 which is in turn transformed into PC-M4 by the aromatic dimethylallyltransferase PC-22. A series of oxidation steps involving 4 cytochrome P450 monooxygenases (PC-21, PC-05, PC-23, PC-20) and a FAD-dependent monooxygenase (PC-14) are required for the transformation of PC-M4 to penitrems A and E. Synthesis of these final products is proposed to proceed via penitrems D and C (PC-21, PC-05, PC-14) and penitrems B and F (PC-21, PC-05, PC-14, PC-23). This Penicillium crustosum (Blue mold fungus) protein is Indole diterpene prenyltransferase penD.